We begin with the raw amino-acid sequence, 492 residues long: Malonyl-CoA decarboxylase, mitochondrial (492 aa).

Residues Met-1–Arg-28 are disordered. Residues Met-1 to Ala-38 constitute a mitochondrion transit peptide. The tract at residues Met-39–Phe-189 is alpha-helical domain. The residue at position 58 (Lys-58) is an N6-acetyllysine. An N6-acetyllysine; alternate modification is found at Lys-167. An N6-succinyllysine; alternate modification is found at Lys-167. A catalytic domain region spans residues Ser-190 to Leu-492. Residue Lys-210 is modified to N6-acetyllysine. At Lys-221 the chain carries N6-succinyllysine. Gln-298–Thr-304 contributes to the malonyl-CoA binding site. Lys-316 is modified (N6-acetyllysine). Ser-328 provides a ligand contact to malonyl-CoA. Residue Ser-328 is the Proton acceptor of the active site. Lys-385 is modified (N6-acetyllysine; alternate). Position 385 is an N6-succinyllysine; alternate (Lys-385). Residue Lys-388 is modified to N6-acetyllysine. A malonyl-CoA-binding site is contributed by His-422. His-422 functions as the Proton donor in the catalytic mechanism. Lys-441 and Lys-471 each carry N6-acetyllysine. A Microbody targeting signal motif is present at residues Ser-490–Leu-492.

As to quaternary structure, homotetramer. Dimer of dimers. The two subunits within a dimer display conformational differences suggesting that at any given moment, only one of the two subunits is competent for malonyl-CoA binding and catalytic activity. Under oxidizing conditions, can form disulfide-linked homotetramers (in vitro). Associates with the peroxisomal targeting signal receptor PEX5. Interchain disulfide bonds may form in peroxisomes (Potential). Interchain disulfide bonds are not expected to form in the reducing environment of the cytoplasm and mitochondria. In terms of processing, acetylation at Lys-471 activates malonyl-CoA decarboxylase activity. Deacetylation at Lys-471 by SIRT4 represses activity, leading to promote lipogenesis.

Its subcellular location is the cytoplasm. The protein resides in the mitochondrion matrix. It localises to the peroxisome. The protein localises to the peroxisome matrix. The catalysed reaction is malonyl-CoA + H(+) = acetyl-CoA + CO2. The protein operates within metabolic intermediate biosynthesis; acetyl-CoA biosynthesis; acetyl-CoA from malonyl-CoA: step 1/1. Malonyl-CoA decarboxylase activity does not require any cofactors or divalent metal ions. Catalyzes the conversion of malonyl-CoA to acetyl-CoA. In the fatty acid biosynthesis MCD selectively removes malonyl-CoA and thus assures that methyl-malonyl-CoA is the only chain elongating substrate for fatty acid synthase and that fatty acids with multiple methyl side chains are produced. In peroxisomes it may be involved in degrading intraperoxisomal malonyl-CoA, which is generated by the peroxisomal beta-oxidation of odd chain-length dicarboxylic fatty acids. Plays a role in the metabolic balance between glucose and lipid oxidation in muscle independent of alterations in insulin signaling. Plays a role in controlling the extent of ischemic injury by promoting glucose oxidation. The sequence is that of Malonyl-CoA decarboxylase, mitochondrial from Mus musculus (Mouse).